The chain runs to 320 residues: GTP 3',8-cyclase (320 aa).

In terms of domain architecture, Radical SAM core spans 5-222 (KLSRPLKVLR…LMKKEFTFYP (218 aa)). GTP is bound at residue Arg14. Residues Cys21, Cys25, and Cys28 each contribute to the [4Fe-4S] cluster site. Residue Arg65 participates in GTP binding. Gly69 contacts S-adenosyl-L-methionine. Thr96 provides a ligand contact to GTP. Ser120 is a binding site for S-adenosyl-L-methionine. Lys157 is a binding site for GTP. Met191 is an S-adenosyl-L-methionine binding site. The [4Fe-4S] cluster site is built by Cys253 and Cys256. 258 to 260 (RIR) provides a ligand contact to GTP. Residue Cys270 participates in [4Fe-4S] cluster binding.

The protein belongs to the radical SAM superfamily. MoaA family. As to quaternary structure, monomer and homodimer. Requires [4Fe-4S] cluster as cofactor.

It carries out the reaction GTP + AH2 + S-adenosyl-L-methionine = (8S)-3',8-cyclo-7,8-dihydroguanosine 5'-triphosphate + 5'-deoxyadenosine + L-methionine + A + H(+). Its pathway is cofactor biosynthesis; molybdopterin biosynthesis. Catalyzes the cyclization of GTP to (8S)-3',8-cyclo-7,8-dihydroguanosine 5'-triphosphate. This Aquifex aeolicus (strain VF5) protein is GTP 3',8-cyclase.